We begin with the raw amino-acid sequence, 965 residues long: Phosphoenolpyruvate carboxylase (965 aa).

Serine 11 carries the phosphoserine modification. Active-site residues include histidine 173 and lysine 601.

The protein belongs to the PEPCase type 1 family. Homotetramer. It depends on Mg(2+) as a cofactor.

The protein localises to the cytoplasm. It catalyses the reaction oxaloacetate + phosphate = phosphoenolpyruvate + hydrogencarbonate. It participates in photosynthesis; C3 acid pathway. Its activity is regulated as follows. By light-reversible phosphorylation. Through the carboxylation of phosphoenolpyruvate (PEP) it forms oxaloacetate, a four-carbon dicarboxylic acid source for the tricarboxylic acid cycle. This is Phosphoenolpyruvate carboxylase (PPC1) from Solanum tuberosum (Potato).